A 168-amino-acid chain; its full sequence is UPF0262 protein BRADO6636 (168 aa).

This sequence belongs to the UPF0262 family.

The protein is UPF0262 protein BRADO6636 of Bradyrhizobium sp. (strain ORS 278).